A 233-amino-acid chain; its full sequence is EEF1A lysine methyltransferase 2 (233 aa).

Belongs to the class I-like SAM-binding methyltransferase superfamily. EFM4 family.

The protein resides in the cytoplasm. Its subcellular location is the nucleus. The catalysed reaction is L-lysyl-[protein] + 3 S-adenosyl-L-methionine = N(6),N(6),N(6)-trimethyl-L-lysyl-[protein] + 3 S-adenosyl-L-homocysteine + 3 H(+). Functionally, protein-lysine methyltransferase that selectively catalyzes the trimethylation of EEF1A at 'Lys-318'. This chain is EEF1A lysine methyltransferase 2, found in Danio rerio (Zebrafish).